A 350-amino-acid polypeptide reads, in one-letter code: Histidinol-phosphate aminotransferase 1 (350 aa).

Lysine 210 carries the post-translational modification N6-(pyridoxal phosphate)lysine.

The protein belongs to the class-II pyridoxal-phosphate-dependent aminotransferase family. Histidinol-phosphate aminotransferase subfamily. In terms of assembly, homodimer. The cofactor is pyridoxal 5'-phosphate.

The catalysed reaction is L-histidinol phosphate + 2-oxoglutarate = 3-(imidazol-4-yl)-2-oxopropyl phosphate + L-glutamate. It participates in amino-acid biosynthesis; L-histidine biosynthesis; L-histidine from 5-phospho-alpha-D-ribose 1-diphosphate: step 7/9. The polypeptide is Histidinol-phosphate aminotransferase 1 (Pseudomonas fluorescens (strain Pf0-1)).